The following is a 318-amino-acid chain: Methionyl-tRNA formyltransferase (318 aa).

112 to 115 serves as a coordination point for (6S)-5,6,7,8-tetrahydrofolate; it reads SILP.

It belongs to the Fmt family.

The catalysed reaction is L-methionyl-tRNA(fMet) + (6R)-10-formyltetrahydrofolate = N-formyl-L-methionyl-tRNA(fMet) + (6S)-5,6,7,8-tetrahydrofolate + H(+). In terms of biological role, attaches a formyl group to the free amino group of methionyl-tRNA(fMet). The formyl group appears to play a dual role in the initiator identity of N-formylmethionyl-tRNA by promoting its recognition by IF2 and preventing the misappropriation of this tRNA by the elongation apparatus. The protein is Methionyl-tRNA formyltransferase of Haemophilus influenzae (strain PittGG).